The following is a 769-amino-acid chain: Multiple C2 domain and transmembrane region protein 5 (769 aa).

C2 domains follow at residues 23 to 143 (SVTG…PQWY), 184 to 305 (PEGV…SRWF), and 345 to 467 (YSSD…THSY). D56, D62, D109, D111, and D116 together coordinate Ca(2+). The next 2 helical transmembrane spans lie at 604–624 (IILVLYPELILPTVFLYLFLI) and 712–732 (LFVLFCLIAAIVLYVTPFQVV).

It belongs to the MCTP family. It depends on Ca(2+) as a cofactor. Highly expressed in roots meristems and shoot apical meristems (SAMs). Observed in flowers.

It localises to the endoplasmic reticulum membrane. In terms of biological role, may function as a signaling molecule by regulating the trafficking of other regulators. The polypeptide is Multiple C2 domain and transmembrane region protein 5 (Arabidopsis thaliana (Mouse-ear cress)).